The following is a 176-amino-acid chain: Inner membrane-spanning protein YciB (176 aa).

6 helical membrane passes run 3 to 23, 24 to 44, 49 to 69, 81 to 101, 119 to 139, and 149 to 169; these read FLFD…WGIF, TATA…AFRH, TMLW…LVLH, LYWL…NNLI, LNVA…YVVH, and FKLF…SLWL.

This sequence belongs to the YciB family.

It is found in the cell inner membrane. Functionally, plays a role in cell envelope biogenesis, maintenance of cell envelope integrity and membrane homeostasis. The polypeptide is Inner membrane-spanning protein YciB (Burkholderia ambifaria (strain MC40-6)).